Here is a 317-residue protein sequence, read N- to C-terminus: Ribosomal protein L11 methyltransferase (317 aa).

S-adenosyl-L-methionine is bound by residues Thr-158, Gly-179, Asp-201, and Asn-244.

This sequence belongs to the methyltransferase superfamily. PrmA family.

The protein localises to the cytoplasm. The enzyme catalyses L-lysyl-[protein] + 3 S-adenosyl-L-methionine = N(6),N(6),N(6)-trimethyl-L-lysyl-[protein] + 3 S-adenosyl-L-homocysteine + 3 H(+). Functionally, methylates ribosomal protein L11. This Lactococcus lactis subsp. lactis (strain IL1403) (Streptococcus lactis) protein is Ribosomal protein L11 methyltransferase.